The chain runs to 207 residues: Guanylate kinase (207 aa).

One can recognise a Guanylate kinase-like domain in the interval 5 to 184 (GNLFIVSAPS…ALADLRAIIR (180 aa)). 12 to 19 (APSGAGKS) provides a ligand contact to ATP.

This sequence belongs to the guanylate kinase family.

It localises to the cytoplasm. The enzyme catalyses GMP + ATP = GDP + ADP. In terms of biological role, essential for recycling GMP and indirectly, cGMP. The chain is Guanylate kinase from Shewanella oneidensis (strain ATCC 700550 / JCM 31522 / CIP 106686 / LMG 19005 / NCIMB 14063 / MR-1).